Reading from the N-terminus, the 280-residue chain is Acetylglutamate kinase (280 aa).

Substrate is bound by residues Gly-64–Gly-65, Arg-86, and Asn-177.

This sequence belongs to the acetylglutamate kinase family. ArgB subfamily.

The protein localises to the cytoplasm. It catalyses the reaction N-acetyl-L-glutamate + ATP = N-acetyl-L-glutamyl 5-phosphate + ADP. The protein operates within amino-acid biosynthesis; L-arginine biosynthesis; N(2)-acetyl-L-ornithine from L-glutamate: step 2/4. Functionally, catalyzes the ATP-dependent phosphorylation of N-acetyl-L-glutamate. This chain is Acetylglutamate kinase, found in Nautilia profundicola (strain ATCC BAA-1463 / DSM 18972 / AmH).